We begin with the raw amino-acid sequence, 1429 residues long: Nitric oxide synthase 1 (1429 aa).

The tract at residues 1–200 is interaction with NOSIP; the sequence is MEEHTFGVQQ…LQDSGEQDEL (200 aa). Positions 17–99 constitute a PDZ domain; sequence SVRLFKRKVG…ETHVVLILRG (83 aa). Disordered stretches follow at residues 114–174 and 271–298; these read DGTP…SVSQ and NNPY…SRCP. The tract at residues 163–240 is interaction with DYNLL1/PIN; the sequence is QGRGQGAGSV…TGIQVDRDLD (78 aa). Over residues 272-294 the composition is skewed to polar residues; the sequence is NPYSENEQSPASGKQSPTKNGSP. Serine 280 carries the post-translational modification Phosphoserine. Serine 334 lines the (6R)-L-erythro-5,6,7,8-tetrahydrobiopterin pocket. Cysteine 415 contributes to the heme b binding site. L-arginine-binding residues include glutamine 478, tryptophan 587, tyrosine 588, and glutamate 592. Residues valine 677, tryptophan 678, and phenylalanine 691 each coordinate (6R)-L-erythro-5,6,7,8-tetrahydrobiopterin. Residue tyrosine 706 coordinates heme b. The interval 725–745 is calmodulin-binding; it reads KRRAIGFKKLAEAVKFSAKLM. In terms of domain architecture, Flavodoxin-like spans 755-935; the sequence is ATILYATETG…AFRTWAKKVF (181 aa). Residues threonine 761, glutamate 762, threonine 763, lysine 765, serine 766, serine 807, threonine 808, and glycine 812 each coordinate FMN. Residues serine 847, serine 857, and serine 858 each carry the phosphoserine modification. Residues serine 886, histidine 891, cysteine 893, glutamate 919, and glutamine 923 each contribute to the FMN site. An FAD-binding FR-type domain is found at 990-1237; the sequence is KRVSAARLLS…VRGAPSFHLP (248 aa). Arginine 1010 is a binding site for NADP(+). Residues histidine 1032, arginine 1173, tyrosine 1174, tyrosine 1175, serine 1176, threonine 1191, and alanine 1193 each contribute to the FAD site. An NADP(+)-binding site is contributed by serine 1196. 4 residues coordinate FAD: tyrosine 1197, valine 1210, cysteine 1211, and serine 1212. Residues threonine 1251, arginine 1284, serine 1313, arginine 1314, lysine 1320, tyrosine 1322, glutamine 1324, aspartate 1357, threonine 1398, and arginine 1400 each contribute to the NADP(+) site.

Belongs to the NOS family. Homodimer. Interacts with DLG4; the interaction possibly being prevented by the association between NOS1 and CAPON. Forms a ternary complex with CAPON and RASD1. Forms a ternary complex with CAPON and SYN1. Interacts with ZDHHC23. Interacts with NOSIP; which may impair its synaptic location. Interacts with HTR4. Interacts with VAC14. Interacts (via N-terminal domain) with DLG4 (via N-terminal tandem pair of PDZ domains). Interacts with SLC6A4. Forms a complex with ASL, ASS1 and SLC7A1; the complex regulates cell-autonomous L-arginine synthesis and citrulline recycling while channeling extracellular L-arginine to nitric oxide synthesis pathway. Interacts with DMD; localizes NOS1 to sarcolemma in muscle cells. Interacts with DYNLL1; inhibits the nitric oxide synthase activity. Requires heme b as cofactor. The cofactor is FAD. It depends on FMN as a cofactor. (6R)-L-erythro-5,6,7,8-tetrahydrobiopterin serves as cofactor. Ubiquitinated; mediated by STUB1/CHIP in the presence of Hsp70 and Hsp40 (in vitro). Widely expressed in the nervous system: expressed in cerebrum, olfactory bulb, hippocampus, midbrain, cerebellum, pons, medulla oblongata, and spinal cord. Also found in skeletal muscle, where it is localized beneath the sarcolemma of fast twitch muscle fibers, and in spleen, heart, kidney, and liver. N-NOS-1 and N-NOS-2 are found in all parts of the nervous system. NNOS beta and gamma occur in a region-specific manner in the brain and NNOS beta expression is developmentally regulated. NNOS Mu is only found in mature skeletal and cardiac muscles.

The protein resides in the cell membrane. Its subcellular location is the sarcolemma. The protein localises to the cell projection. It is found in the dendritic spine. It catalyses the reaction 2 L-arginine + 3 NADPH + 4 O2 + H(+) = 2 L-citrulline + 2 nitric oxide + 3 NADP(+) + 4 H2O. With respect to regulation, stimulated by calcium/calmodulin. Inhibited by DYNLL1 that prevents the dimerization of the protein. Inhibited by NOSIP. Functionally, produces nitric oxide (NO) which is a messenger molecule with diverse functions throughout the body. In the brain and peripheral nervous system, NO displays many properties of a neurotransmitter. Probably has nitrosylase activity and mediates cysteine S-nitrosylation of cytoplasmic target proteins such SRR. Isoform NNOS Mu may be an effector enzyme for the dystrophin complex. The polypeptide is Nitric oxide synthase 1 (Mus musculus (Mouse)).